The primary structure comprises 478 residues: Ankyrin repeat and BTB/POZ domain-containing protein 1 (478 aa).

2 ANK repeats span residues 1 to 31 (MDTS…EVNV) and 35 to 64 (WDST…RCEA). 2 consecutive BTB domains span residues 115–182 (SDVV…DIGV) and 272–346 (PDIC…ELPP). Residues 451–477 (VQTYSAIEEAQQRLRALEDLLVSIGLD) are a coiled coil.

The protein resides in the cytoplasm. Its function is as follows. May act as a mediator of the PTEN growth-suppressive signaling pathway. May play a role in developmental processes. The protein is Ankyrin repeat and BTB/POZ domain-containing protein 1 of Mus musculus (Mouse).